An 83-amino-acid polypeptide reads, in one-letter code: Cytochrome c-554(548) (83 aa).

The heme c site is built by Cys14, Cys17, His18, and Met63.

As to quaternary structure, homodimer. Binds 1 heme c group covalently per subunit.

The sequence is that of Cytochrome c-554(548) from Halomonas halodenitrificans (strain ATCC 12084 / NCIMB 8669) (Paracoccus halodenitrificans).